The chain runs to 280 residues: uncharacterized protein (280 aa).

10 N-linked (GlcNAc...) asparagine; by host glycosylation sites follow: asparagine 75, asparagine 98, asparagine 107, asparagine 143, asparagine 158, asparagine 170, asparagine 192, asparagine 207, asparagine 224, and asparagine 230. A helical transmembrane segment spans residues 235–255 (AFTYGSWGVAMLLFAAVMVLV).

The protein belongs to the RL11 family.

It is found in the host membrane. This is an uncharacterized protein from Human cytomegalovirus (strain Merlin) (HHV-5).